The chain runs to 364 residues: Protein LATERAL BRANCHING OXIDOREDUCTASE 1 (364 aa).

The region spanning 203–312 is the Fe2OG dioxygenase domain; it reads RFEEMFGEAV…RLTIVTFYAP (110 aa). 3 residues coordinate Fe cation: His-235, Asp-237, and His-293. Position 303 (Arg-303) interacts with 2-oxoglutarate.

Belongs to the iron/ascorbate-dependent oxidoreductase family. In terms of assembly, monomer. Fe(2+) serves as cofactor. It depends on L-ascorbate as a cofactor. As to expression, expressed in the vasculature throughout the plant and in the buds and root tips.

The protein resides in the cytoplasm. The enzyme catalyses (11R)-methyl carlactonoate + 2-oxoglutarate + O2 = (11R)-hydroxymethyl carlactonoate + succinate + CO2. Functionally, oxoglutarate-dependent dioxygenase involved in the biosynthesis of strigolactone natural products, bioactive compounds promoting plant fitness and soil microbe interactions, but preventing shoot branching. Catalyzes the hydroxylation of (11R)-methyl carlactonoate (MeCLA) to produce (11R)-hydroxymethyl carlactonoate (1'-HO-MeCLA) in final stages of strigolactone biosynthesis, downstream of MAX1 and CLAMT. The protein is Protein LATERAL BRANCHING OXIDOREDUCTASE 1 of Arabidopsis thaliana (Mouse-ear cress).